Reading from the N-terminus, the 622-residue chain is 1-deoxy-D-xylulose-5-phosphate synthase (622 aa).

Thiamine diphosphate is bound by residues H71 and 112 to 114 (GHS). A Mg(2+)-binding site is contributed by D143. Residues 144-145 (GA), N172, Y283, and E363 each bind thiamine diphosphate. Mg(2+) is bound at residue N172.

It belongs to the transketolase family. DXPS subfamily. Homodimer. The cofactor is Mg(2+). Thiamine diphosphate serves as cofactor.

It catalyses the reaction D-glyceraldehyde 3-phosphate + pyruvate + H(+) = 1-deoxy-D-xylulose 5-phosphate + CO2. The protein operates within metabolic intermediate biosynthesis; 1-deoxy-D-xylulose 5-phosphate biosynthesis; 1-deoxy-D-xylulose 5-phosphate from D-glyceraldehyde 3-phosphate and pyruvate: step 1/1. Catalyzes the acyloin condensation reaction between C atoms 2 and 3 of pyruvate and glyceraldehyde 3-phosphate to yield 1-deoxy-D-xylulose-5-phosphate (DXP). In Caldanaerobacter subterraneus subsp. tengcongensis (strain DSM 15242 / JCM 11007 / NBRC 100824 / MB4) (Thermoanaerobacter tengcongensis), this protein is 1-deoxy-D-xylulose-5-phosphate synthase.